We begin with the raw amino-acid sequence, 160 residues long: 2-C-methyl-D-erythritol 2,4-cyclodiphosphate synthase (160 aa).

A divalent metal cation contacts are provided by Asp9 and His11. 4-CDP-2-C-methyl-D-erythritol 2-phosphate contacts are provided by residues 9 to 11 (DVH) and 35 to 36 (HS). A divalent metal cation is bound at residue His43. 4-CDP-2-C-methyl-D-erythritol 2-phosphate-binding positions include 57 to 59 (DIG), 62 to 66 (FPDTD), 101 to 107 (AEAPKMA), 133 to 136 (TTSE), Phe140, and Arg143.

The protein belongs to the IspF family. As to quaternary structure, homotrimer. The cofactor is a divalent metal cation.

The enzyme catalyses 4-CDP-2-C-methyl-D-erythritol 2-phosphate = 2-C-methyl-D-erythritol 2,4-cyclic diphosphate + CMP. The protein operates within isoprenoid biosynthesis; isopentenyl diphosphate biosynthesis via DXP pathway; isopentenyl diphosphate from 1-deoxy-D-xylulose 5-phosphate: step 4/6. In terms of biological role, involved in the biosynthesis of isopentenyl diphosphate (IPP) and dimethylallyl diphosphate (DMAPP), two major building blocks of isoprenoid compounds. Catalyzes the conversion of 4-diphosphocytidyl-2-C-methyl-D-erythritol 2-phosphate (CDP-ME2P) to 2-C-methyl-D-erythritol 2,4-cyclodiphosphate (ME-CPP) with a corresponding release of cytidine 5-monophosphate (CMP). This Methylobacillus flagellatus (strain ATCC 51484 / DSM 6875 / VKM B-1610 / KT) protein is 2-C-methyl-D-erythritol 2,4-cyclodiphosphate synthase.